The sequence spans 744 residues: Phosphoribosylformylglycinamidine synthase subunit PurL (744 aa).

Residue His-50 is part of the active site. 2 residues coordinate ATP: Tyr-53 and Lys-92. Glu-94 lines the Mg(2+) pocket. Residues 95–98 (SHNH) and Arg-117 contribute to the substrate site. The Proton acceptor role is filled by His-96. Asp-118 is a binding site for Mg(2+). Residue Gln-241 participates in substrate binding. Residue Asp-269 participates in Mg(2+) binding. 313 to 315 (ESQ) provides a ligand contact to substrate. 2 residues coordinate ATP: Asp-495 and Gly-532. Asn-533 contacts Mg(2+). Ser-535 contacts substrate.

This sequence belongs to the FGAMS family. Monomer. Part of the FGAM synthase complex composed of 1 PurL, 1 PurQ and 2 PurS subunits.

It is found in the cytoplasm. It catalyses the reaction N(2)-formyl-N(1)-(5-phospho-beta-D-ribosyl)glycinamide + L-glutamine + ATP + H2O = 2-formamido-N(1)-(5-O-phospho-beta-D-ribosyl)acetamidine + L-glutamate + ADP + phosphate + H(+). Its pathway is purine metabolism; IMP biosynthesis via de novo pathway; 5-amino-1-(5-phospho-D-ribosyl)imidazole from N(2)-formyl-N(1)-(5-phospho-D-ribosyl)glycinamide: step 1/2. Functionally, part of the phosphoribosylformylglycinamidine synthase complex involved in the purines biosynthetic pathway. Catalyzes the ATP-dependent conversion of formylglycinamide ribonucleotide (FGAR) and glutamine to yield formylglycinamidine ribonucleotide (FGAM) and glutamate. The FGAM synthase complex is composed of three subunits. PurQ produces an ammonia molecule by converting glutamine to glutamate. PurL transfers the ammonia molecule to FGAR to form FGAM in an ATP-dependent manner. PurS interacts with PurQ and PurL and is thought to assist in the transfer of the ammonia molecule from PurQ to PurL. The protein is Phosphoribosylformylglycinamidine synthase subunit PurL of Rhizobium johnstonii (strain DSM 114642 / LMG 32736 / 3841) (Rhizobium leguminosarum bv. viciae).